A 318-amino-acid polypeptide reads, in one-letter code: Ribose-phosphate pyrophosphokinase (318 aa).

ATP contacts are provided by residues D46–E48 and R105–Q106. Residues H139 and D178 each coordinate Mg(2+). Residue K201 is part of the active site. D-ribose 5-phosphate contacts are provided by residues R203, D227, and D231–T235.

This sequence belongs to the ribose-phosphate pyrophosphokinase family. Class I subfamily. In terms of assembly, homohexamer. Mg(2+) serves as cofactor.

The protein localises to the cytoplasm. The enzyme catalyses D-ribose 5-phosphate + ATP = 5-phospho-alpha-D-ribose 1-diphosphate + AMP + H(+). It participates in metabolic intermediate biosynthesis; 5-phospho-alpha-D-ribose 1-diphosphate biosynthesis; 5-phospho-alpha-D-ribose 1-diphosphate from D-ribose 5-phosphate (route I): step 1/1. In terms of biological role, involved in the biosynthesis of the central metabolite phospho-alpha-D-ribosyl-1-pyrophosphate (PRPP) via the transfer of pyrophosphoryl group from ATP to 1-hydroxyl of ribose-5-phosphate (Rib-5-P). In Helicobacter pylori (strain J99 / ATCC 700824) (Campylobacter pylori J99), this protein is Ribose-phosphate pyrophosphokinase.